The chain runs to 358 residues: C-X-C chemokine receptor type 4-B (358 aa).

The interval Met1–Phe25 is important for chemokine binding and signaling. At Met1 to Phe44 the chain is on the extracellular side. Asn16 and Asn20 each carry an N-linked (GlcNAc...) asparagine glycan. Disulfide bonds link Cys32–Cys281 and Cys113–Cys190. The chain crosses the membrane as a helical span at residues Leu45–Met67. Topologically, residues Gly68–Arg81 are cytoplasmic. A helical membrane pass occupies residues Leu82–Ala103. The tract at residues Trp98–Asp101 is chemokine binding. Residues Ile104–Lys114 are Extracellular-facing. Residues Ala115–Ile134 traverse the membrane as a helical segment. The segment at His117 to Thr121 is chemokine binding. The Cytoplasmic portion of the chain corresponds to Ser135–Lys158. The segment at Tyr139–Ser151 is involved in dimerization; when bound to chemokine. A helical membrane pass occupies residues Val159 to Phe178. At Ala179–Trp202 the chain is on the extracellular side. The chemokine binding, important for signaling stretch occupies residues Cys190–Tyr194. Residues Thr203–Leu223 traverse the membrane as a helical segment. Topologically, residues Val224–Thr248 are cytoplasmic. A helical membrane pass occupies residues Val249–Thr268. Over Asp269–Lys289 the chain is Extracellular. The chain crosses the membrane as a helical span at residues Ala290–Tyr309. Residues Ala310–Ser358 lie on the Cytoplasmic side of the membrane. Positions Lys338–Ser358 are disordered. Over residues Ser344 to Ser358 the composition is skewed to low complexity.

This sequence belongs to the G-protein coupled receptor 1 family. In terms of assembly, monomer. Can form dimers. Post-translationally, sulfation is required for efficient binding of cxcl12/sdf-1alpha and promotes its dimerization. In terms of processing, O- and N-glycosylated.

Its subcellular location is the cell membrane. It localises to the cytoplasm. The protein localises to the nucleus. The protein resides in the early endosome. It is found in the late endosome. Its subcellular location is the lysosome. In terms of biological role, receptor for the C-X-C chemokine cxcl12/sdf-1. Transduces a signal by increasing the intracellular level of calcium ions. Signaling with cxcl12/sdf-1 mediates the directional movement of mesodermal cells during gastrulation. May play a role in the migration of embryonic presumptive primordial germ cells (pPGCs). May also be involved in regulating migration of hematopoietic stem cells into the larval liver. The polypeptide is C-X-C chemokine receptor type 4-B (cxcr4-b) (Xenopus laevis (African clawed frog)).